A 339-amino-acid polypeptide reads, in one-letter code: Undecaprenyl-phosphate 4-deoxy-4-formamido-L-arabinose transferase (339 aa).

2 helical membrane passes run 235–255 (LSLV…FLLV) and 269–289 (LFVL…GMGL).

This sequence belongs to the glycosyltransferase 2 family.

The protein localises to the cell inner membrane. The enzyme catalyses UDP-4-deoxy-4-formamido-beta-L-arabinose + di-trans,octa-cis-undecaprenyl phosphate = 4-deoxy-4-formamido-alpha-L-arabinopyranosyl di-trans,octa-cis-undecaprenyl phosphate + UDP. Its pathway is glycolipid biosynthesis; 4-amino-4-deoxy-alpha-L-arabinose undecaprenyl phosphate biosynthesis; 4-amino-4-deoxy-alpha-L-arabinose undecaprenyl phosphate from UDP-4-deoxy-4-formamido-beta-L-arabinose and undecaprenyl phosphate: step 1/2. The protein operates within bacterial outer membrane biogenesis; lipopolysaccharide biosynthesis. In terms of biological role, catalyzes the transfer of 4-deoxy-4-formamido-L-arabinose from UDP to undecaprenyl phosphate. The modified arabinose is attached to lipid A and is required for resistance to polymyxin and cationic antimicrobial peptides. The sequence is that of Undecaprenyl-phosphate 4-deoxy-4-formamido-L-arabinose transferase from Pseudomonas paraeruginosa (strain DSM 24068 / PA7) (Pseudomonas aeruginosa (strain PA7)).